The following is an 89-amino-acid chain: Small ribosomal subunit protein uS15 (89 aa).

It belongs to the universal ribosomal protein uS15 family. As to quaternary structure, part of the 30S ribosomal subunit. Forms a bridge to the 50S subunit in the 70S ribosome, contacting the 23S rRNA.

In terms of biological role, one of the primary rRNA binding proteins, it binds directly to 16S rRNA where it helps nucleate assembly of the platform of the 30S subunit by binding and bridging several RNA helices of the 16S rRNA. Functionally, forms an intersubunit bridge (bridge B4) with the 23S rRNA of the 50S subunit in the ribosome. The chain is Small ribosomal subunit protein uS15 from Phocaeicola vulgatus (strain ATCC 8482 / DSM 1447 / JCM 5826 / CCUG 4940 / NBRC 14291 / NCTC 11154) (Bacteroides vulgatus).